A 400-amino-acid polypeptide reads, in one-letter code: Lysophospholipid transporter LplT (400 aa).

The next 12 membrane-spanning stretches (helical) occupy residues 19-39, 53-73, 91-111, 139-159, 164-184, 195-213, 227-247, 257-277, 281-301, 304-324, 352-372, and 373-393; these read VIVAQFLSAFGDNALLFATLA, VLQMVFVGAYILFAPFVGQIA, AGAAGICLGINPFVGYTLVGI, MMEASTIAAILLGSVAGGVLA, IAALVACALAYAGAVAANLFI, SWRLSAMTRSFFSACVVLW, LFWGAGVTLRFLLVLWVPVAL, YLNAMVAVGIVVGAGAAAKLV, TVSRCMPAGILIGVVVAIFSL, ALLPAYALLLLIGMLGGFFVV, NSAMLLMLGLYSLAVLVGVPA, and VAIGIGFGVLFALAIAALWIW.

The protein belongs to the major facilitator superfamily. LplT (TC 2.A.1.42) family.

The protein resides in the cell inner membrane. Functionally, catalyzes the facilitated diffusion of 2-acyl-glycero-3-phosphoethanolamine (2-acyl-GPE) into the cell. The protein is Lysophospholipid transporter LplT of Salmonella paratyphi B (strain ATCC BAA-1250 / SPB7).